The following is a 339-amino-acid chain: Ketol-acid reductoisomerase (NADP(+)) (339 aa).

One can recognise a KARI N-terminal Rossmann domain in the interval 1 to 182 (MRVYYDRDAD…GGGRAGIIET (182 aa)). NADP(+)-binding positions include 24–27 (YGSQ), arginine 48, serine 51, serine 53, and 83–86 (DELQ). Histidine 108 is a catalytic residue. Residue glycine 134 coordinates NADP(+). Residues 183–328 (TFREECETDL…ARLRDMMPWI (146 aa)) enclose the KARI C-terminal knotted domain. Mg(2+) is bound by residues aspartate 191, glutamate 195, glutamate 227, and glutamate 231. Serine 252 is a binding site for substrate.

The protein belongs to the ketol-acid reductoisomerase family. Mg(2+) serves as cofactor.

The catalysed reaction is (2R)-2,3-dihydroxy-3-methylbutanoate + NADP(+) = (2S)-2-acetolactate + NADPH + H(+). The enzyme catalyses (2R,3R)-2,3-dihydroxy-3-methylpentanoate + NADP(+) = (S)-2-ethyl-2-hydroxy-3-oxobutanoate + NADPH + H(+). Its pathway is amino-acid biosynthesis; L-isoleucine biosynthesis; L-isoleucine from 2-oxobutanoate: step 2/4. It participates in amino-acid biosynthesis; L-valine biosynthesis; L-valine from pyruvate: step 2/4. Its function is as follows. Involved in the biosynthesis of branched-chain amino acids (BCAA). Catalyzes an alkyl-migration followed by a ketol-acid reduction of (S)-2-acetolactate (S2AL) to yield (R)-2,3-dihydroxy-isovalerate. In the isomerase reaction, S2AL is rearranged via a Mg-dependent methyl migration to produce 3-hydroxy-3-methyl-2-ketobutyrate (HMKB). In the reductase reaction, this 2-ketoacid undergoes a metal-dependent reduction by NADPH to yield (R)-2,3-dihydroxy-isovalerate. The polypeptide is Ketol-acid reductoisomerase (NADP(+)) (Nitrobacter winogradskyi (strain ATCC 25391 / DSM 10237 / CIP 104748 / NCIMB 11846 / Nb-255)).